The primary structure comprises 868 residues: Phospholipase D delta (868 aa).

The C2 domain maps to 1–154 (MAEKVSEDVM…ASGERISGWF (154 aa)). Residue Asp216 coordinates Ca(2+). The PLD phosphodiesterase 1 domain maps to 368–403 (TLFTHHQKCVLVDTQAVGNNRKVTAFIGGLDLCDGR). Active-site residues include His373, Lys375, and Asp380. His373 is an a 1,2-diacyl-sn-glycero-3-phosphate binding site. Ca(2+) contacts are provided by His409 and His440. A 1,2-diacyl-sn-glycero-3-phosphate is bound by residues Gln588 and His718. One can recognise a PLD phosphodiesterase 2 domain in the interval 713-740 (FMIYVHAKGMIVDDEYVLMGSANINQRS). Residues His718, Lys720, and Asp725 contribute to the active site. Glu781 contacts Ca(2+).

It belongs to the phospholipase D family. C2-PLD subfamily. As to quaternary structure, interacts with GAPC1 and GAPC2. Increased interaction in the presence of H(2)O(2). Requires Ca(2+) as cofactor. As to expression, expressed in roots, leaves, stems, siliques and flowers. Strongly expressed in the vascular tissues of cotyledons and leaves under dehydration stress conditions. Expression is higher in old leaves than in young leaves. Expressed in leaves and guard cells. The isoform 2 may not be present in siliques.

It is found in the cell membrane. The enzyme catalyses a 1,2-diacyl-sn-glycero-3-phosphocholine + H2O = a 1,2-diacyl-sn-glycero-3-phosphate + choline + H(+). With respect to regulation, activated by free oleic acid in a dose-dependent manner and less effectively by other unsaturated fatty acids such as linoleic and linolenic acids. Not activated by the saturated fatty acids stearic and palmitic acids. PIP2 and Ca(2+) stimulate activity by promoting lipid substrate binding to the active site. Activated by H(2)O(2) and by binding to GAPC. In terms of biological role, hydrolyzes glycerol-phospholipids at the terminal phosphodiesteric bond to generate phosphatidic acids (PA). May be involved in PA accumulation in the dehydration stress response and in the transduction of hormonal and environmental signals to the microtubules cytoskeleton. Prefers phosphatidylethanolamine to phosphatidylcholine as substrate. Involved in H(2)O(2) and abscisic acid (ABA)-induced stomatal closure. Involved in nitric oxide (NO) signaling during stomatal closure. Plays a positive role in ABA-promoted senescence. Involved in basal defense and nonhost resistance. In Arabidopsis thaliana (Mouse-ear cress), this protein is Phospholipase D delta.